Reading from the N-terminus, the 80-residue chain is Acyl carrier protein (80 aa).

The Carrier domain maps to 4-79 (EEIFNKIKDL…DAVSYIKSHQ (76 aa)). Residue serine 39 is modified to O-(pantetheine 4'-phosphoryl)serine.

Belongs to the acyl carrier protein (ACP) family. Post-translationally, 4'-phosphopantetheine is transferred from CoA to a specific serine of apo-ACP by AcpS. This modification is essential for activity because fatty acids are bound in thioester linkage to the sulfhydryl of the prosthetic group.

The protein localises to the cytoplasm. It functions in the pathway lipid metabolism; fatty acid biosynthesis. Its function is as follows. Carrier of the growing fatty acid chain in fatty acid biosynthesis. The chain is Acyl carrier protein from Lactobacillus acidophilus (strain ATCC 700396 / NCK56 / N2 / NCFM).